Consider the following 676-residue polypeptide: DNA ligase (676 aa).

Residues 35–39, 84–85, and glutamate 115 each bind NAD(+); these read DAVYD and SL. Residue lysine 117 is the N6-AMP-lysine intermediate of the active site. Arginine 138, glutamate 177, lysine 296, and lysine 320 together coordinate NAD(+). Zn(2+) contacts are provided by cysteine 414, cysteine 417, cysteine 432, and cysteine 437. The 78-residue stretch at 599 to 676 folds into the BRCT domain; it reads NANLKLVGKT…SEAELLKILA (78 aa).

Belongs to the NAD-dependent DNA ligase family. LigA subfamily. Requires Mg(2+) as cofactor. The cofactor is Mn(2+).

The catalysed reaction is NAD(+) + (deoxyribonucleotide)n-3'-hydroxyl + 5'-phospho-(deoxyribonucleotide)m = (deoxyribonucleotide)n+m + AMP + beta-nicotinamide D-nucleotide.. DNA ligase that catalyzes the formation of phosphodiester linkages between 5'-phosphoryl and 3'-hydroxyl groups in double-stranded DNA using NAD as a coenzyme and as the energy source for the reaction. It is essential for DNA replication and repair of damaged DNA. The protein is DNA ligase of Trichormus variabilis (strain ATCC 29413 / PCC 7937) (Anabaena variabilis).